We begin with the raw amino-acid sequence, 208 residues long: Large ribosomal subunit protein uL3 (208 aa).

Residue glutamine 149 is modified to N5-methylglutamine.

It belongs to the universal ribosomal protein uL3 family. Part of the 50S ribosomal subunit. Forms a cluster with proteins L14 and L19. Post-translationally, methylated by PrmB.

Functionally, one of the primary rRNA binding proteins, it binds directly near the 3'-end of the 23S rRNA, where it nucleates assembly of the 50S subunit. In Glaesserella parasuis serovar 5 (strain SH0165) (Haemophilus parasuis), this protein is Large ribosomal subunit protein uL3.